We begin with the raw amino-acid sequence, 182 residues long: Putative manganese efflux pump MntP (182 aa).

6 helical membrane-spanning segments follow: residues 6-26 (TVLVALALGCDAFAVGMGVGT), 37-57 (LSFHFGLFQMMMPIAGWFVGS), 59-79 (AADLVSTWGPWISFALLLFIG), 104-126 (SSLVMLSVATSMDALGVGFSFGI), 131-149 (LFLSAVWIGITAGIMTWGA), and 164-181 (METVGGLILVAIAVKLLL).

This sequence belongs to the MntP (TC 9.B.29) family.

The protein resides in the cell inner membrane. Its function is as follows. Probably functions as a manganese efflux pump. This is Putative manganese efflux pump MntP from Syntrophobacter fumaroxidans (strain DSM 10017 / MPOB).